Here is a 176-residue protein sequence, read N- to C-terminus: Co-chaperone protein HscB homolog (176 aa).

Residues Thr-7–Leu-79 enclose the J domain.

The protein belongs to the HscB family. In terms of assembly, interacts with HscA and stimulates its ATPase activity.

Functionally, co-chaperone involved in the maturation of iron-sulfur cluster-containing proteins. Seems to help targeting proteins to be folded toward HscA. This chain is Co-chaperone protein HscB homolog, found in Ralstonia nicotianae (strain ATCC BAA-1114 / GMI1000) (Ralstonia solanacearum).